The chain runs to 82 residues: Small ribosomal subunit protein bS18 (82 aa).

Positions 1–20 are disordered; that stretch reads MSEASSAPVRRPFHRRRKTC.

It belongs to the bacterial ribosomal protein bS18 family. In terms of assembly, part of the 30S ribosomal subunit. Forms a tight heterodimer with protein bS6.

Binds as a heterodimer with protein bS6 to the central domain of the 16S rRNA, where it helps stabilize the platform of the 30S subunit. The chain is Small ribosomal subunit protein bS18 from Rhizobium etli (strain CIAT 652).